Consider the following 172-residue polypeptide: Large ribosomal subunit protein bL17 (172 aa).

Positions 127-172 (KAAKQDRAKRVKGSKKVTGDVAPAVAPVPSAPAETQEEAKAPESAE) are disordered. Residues 147–159 (VAPAVAPVPSAPA) show a composition bias toward low complexity. Basic and acidic residues predominate over residues 163–172 (EEAKAPESAE).

This sequence belongs to the bacterial ribosomal protein bL17 family. Part of the 50S ribosomal subunit. Contacts protein L32.

The protein is Large ribosomal subunit protein bL17 of Chlorobium luteolum (strain DSM 273 / BCRC 81028 / 2530) (Pelodictyon luteolum).